Here is a 386-residue protein sequence, read N- to C-terminus: N-acetylneuraminate epimerase (386 aa).

Residues Met1–Ala29 form the signal peptide. 7 Kelch repeats span residues Val51–Asn95, Glu97–Asn149, Thr151–Tyr186, Asn187–Asn232, Leu235–Ala284, Gln306–Asp355, and Val357–Lys386. Glu241 functions as the Proton acceptor in the catalytic mechanism.

It belongs to the NanM family. Homodimer.

The protein resides in the periplasm. It catalyses the reaction N-acetyl-alpha-neuraminate = N-acetyl-beta-neuraminate. In terms of biological role, converts alpha-N-acetylneuranimic acid (Neu5Ac) to the beta-anomer, accelerating the equilibrium between the alpha- and beta-anomers. Probably facilitates sialidase-negative bacteria to compete successfully for limited amounts of extracellular Neu5Ac, which is likely taken up in the beta-anomer. In addition, the rapid removal of sialic acid from solution might be advantageous to the bacterium to damp down host responses. This Salmonella choleraesuis (strain SC-B67) protein is N-acetylneuraminate epimerase.